The chain runs to 179 residues: UPF0227 protein VIBHAR_01524 (179 aa).

It belongs to the UPF0227 family.

This Vibrio campbellii (strain ATCC BAA-1116) protein is UPF0227 protein VIBHAR_01524.